The following is an 89-amino-acid chain: Small ribosomal subunit protein uS15 (89 aa).

Belongs to the universal ribosomal protein uS15 family. Part of the 30S ribosomal subunit. Forms a bridge to the 50S subunit in the 70S ribosome, contacting the 23S rRNA.

Functionally, one of the primary rRNA binding proteins, it binds directly to 16S rRNA where it helps nucleate assembly of the platform of the 30S subunit by binding and bridging several RNA helices of the 16S rRNA. In terms of biological role, forms an intersubunit bridge (bridge B4) with the 23S rRNA of the 50S subunit in the ribosome. In Parafrankia sp. (strain EAN1pec), this protein is Small ribosomal subunit protein uS15.